The chain runs to 277 residues: MLKGVENHSLPRTAAFFDLDKTVIAKSSTLTFSKSFYQGGLINRRAVLRTAYAQFVFLAGGADHDQMERMRAYLSALCRGWNVQQVKEIVAETLHDLIDPIIYDEAASLIEEHHTAGRDVVIVSTSGAEVVEPIGELLGADRVVATRMVVGDDGCFTGEVEYYAYGPTKAEAIRELAASEGYDLSRCYAYSDSATDVPMLESVGRPHAVNPDRALRREALARGWPILDFHRPVRLKQRIPGFSVPPRPALVAVAAIGAAAATAGLVWYANRRRANVA.

3 residues coordinate Mg(2+): D18, D20, and D192.

It belongs to the HAD-like hydrolase superfamily. SerB family.

This is Inhibition of morphological differentiation protein from Streptomyces azureus.